The sequence spans 599 residues: Aspartate--tRNA ligase (599 aa).

Glu-175 is a binding site for L-aspartate. Positions 199-202 are aspartate; sequence QQFK. L-aspartate is bound by residues Arg-221 and His-446. 221–223 lines the ATP pocket; it reads RDE. Position 480 (Glu-480) interacts with ATP. Arg-487 is an L-aspartate binding site. 532–535 contributes to the ATP binding site; sequence GVDR.

This sequence belongs to the class-II aminoacyl-tRNA synthetase family. Type 1 subfamily. Homodimer.

It is found in the cytoplasm. It catalyses the reaction tRNA(Asp) + L-aspartate + ATP = L-aspartyl-tRNA(Asp) + AMP + diphosphate. Its function is as follows. Catalyzes the attachment of L-aspartate to tRNA(Asp) in a two-step reaction: L-aspartate is first activated by ATP to form Asp-AMP and then transferred to the acceptor end of tRNA(Asp). This is Aspartate--tRNA ligase from Streptomyces griseus subsp. griseus (strain JCM 4626 / CBS 651.72 / NBRC 13350 / KCC S-0626 / ISP 5235).